A 131-amino-acid polypeptide reads, in one-letter code: Small ribosomal subunit protein uS8 (131 aa).

This sequence belongs to the universal ribosomal protein uS8 family. Part of the 30S ribosomal subunit. Contacts proteins S5 and S12.

Its function is as follows. One of the primary rRNA binding proteins, it binds directly to 16S rRNA central domain where it helps coordinate assembly of the platform of the 30S subunit. In Wolbachia pipientis subsp. Culex pipiens (strain wPip), this protein is Small ribosomal subunit protein uS8.